Reading from the N-terminus, the 391-residue chain is Homoserine O-acetyltransferase (391 aa).

The 311-residue stretch at 50–360 folds into the AB hydrolase-1 domain; that stretch reads NAILICHALT…DKGHDAFLLD (311 aa). Ser-155 acts as the Nucleophile in catalysis. Residue Arg-225 participates in substrate binding. Residues Asp-321 and His-354 contribute to the active site. Asp-355 is a substrate binding site.

The protein belongs to the AB hydrolase superfamily. MetX family. Homodimer.

It localises to the cytoplasm. It carries out the reaction L-homoserine + acetyl-CoA = O-acetyl-L-homoserine + CoA. It participates in amino-acid biosynthesis; L-methionine biosynthesis via de novo pathway; O-acetyl-L-homoserine from L-homoserine: step 1/1. In terms of biological role, transfers an acetyl group from acetyl-CoA to L-homoserine, forming acetyl-L-homoserine. This chain is Homoserine O-acetyltransferase, found in Rhodospirillum rubrum (strain ATCC 11170 / ATH 1.1.1 / DSM 467 / LMG 4362 / NCIMB 8255 / S1).